The primary structure comprises 414 residues: Multifunctional CCA protein (414 aa).

ATP is bound by residues glycine 8 and arginine 11. Glycine 8 and arginine 11 together coordinate CTP. Mg(2+) is bound by residues aspartate 21 and aspartate 23. ATP contacts are provided by arginine 91, arginine 137, and arginine 140. Residues arginine 91, arginine 137, and arginine 140 each contribute to the CTP site. The 102-residue stretch at threonine 228–tryptophan 329 folds into the HD domain.

This sequence belongs to the tRNA nucleotidyltransferase/poly(A) polymerase family. Bacterial CCA-adding enzyme type 1 subfamily. In terms of assembly, monomer. Can also form homodimers and oligomers. Mg(2+) is required as a cofactor. It depends on Ni(2+) as a cofactor.

The enzyme catalyses a tRNA precursor + 2 CTP + ATP = a tRNA with a 3' CCA end + 3 diphosphate. The catalysed reaction is a tRNA with a 3' CCA end + 2 CTP + ATP = a tRNA with a 3' CCACCA end + 3 diphosphate. Its function is as follows. Catalyzes the addition and repair of the essential 3'-terminal CCA sequence in tRNAs without using a nucleic acid template. Adds these three nucleotides in the order of C, C, and A to the tRNA nucleotide-73, using CTP and ATP as substrates and producing inorganic pyrophosphate. tRNA 3'-terminal CCA addition is required both for tRNA processing and repair. Also involved in tRNA surveillance by mediating tandem CCA addition to generate a CCACCA at the 3' terminus of unstable tRNAs. While stable tRNAs receive only 3'-terminal CCA, unstable tRNAs are marked with CCACCA and rapidly degraded. The polypeptide is Multifunctional CCA protein (Edwardsiella ictaluri (strain 93-146)).